Reading from the N-terminus, the 310-residue chain is Putative type II methyltransferase M.MJ0563P (310 aa).

One can recognise an SAM-dependent MTase C5-type domain in the interval 1–310; the sequence is MNVIDLFSGC…AIAKEIKKQL (310 aa). The active site involves Cys-77.

The protein belongs to the class I-like SAM-binding methyltransferase superfamily. C5-methyltransferase family.

The enzyme catalyses a 2'-deoxycytidine in DNA + S-adenosyl-L-methionine = a 5-methyl-2'-deoxycytidine in DNA + S-adenosyl-L-homocysteine + H(+). In terms of biological role, a putative methylase that may protect DNA from cleavage by an unknown endonuclease. The sequence is that of Putative type II methyltransferase M.MJ0563P from Methanocaldococcus jannaschii (strain ATCC 43067 / DSM 2661 / JAL-1 / JCM 10045 / NBRC 100440) (Methanococcus jannaschii).